A 155-amino-acid chain; its full sequence is MSRRGTTEEKTAKSDPIYRNRLVNMLVNRILKHGKKSLAYQIIYRALKKIQQKTEKNPLSVLRQAIRGVTPDIAVKARRVGGSTHQVPIEIGSAQGKALAVRWLLGASRKRPGRNMAFKLSSELVDAAKGSGDAIRKKEETHRMAEANRAFAHFR.

It belongs to the universal ribosomal protein uS7 family. As to quaternary structure, part of the 30S ribosomal subunit.

The protein localises to the plastid. It localises to the chloroplast. Functionally, one of the primary rRNA binding proteins, it binds directly to 16S rRNA where it nucleates assembly of the head domain of the 30S subunit. The protein is Small ribosomal subunit protein uS7cz/uS7cy (rps7-A) of Citrus sinensis (Sweet orange).